A 997-amino-acid polypeptide reads, in one-letter code: Glutamate [NMDA] receptor subunit 1 (997 aa).

Positions 1–26 are cleaved as a signal peptide; that stretch reads MAVAEFVFCWPLFELAIVLLVAPIHA. Residues 27–573 are Extracellular-facing; it reads AQRHTASDNP…TLVSFLQPFS (547 aa). 7 N-linked (GlcNAc...) asparagine glycosylation sites follow: Asn-258, Asn-314, Asn-345, Asn-397, Asn-454, Asn-481, and Asn-501. Residues 530 to 532 and Arg-537 each bind glycine; that span reads PLT. A helical membrane pass occupies residues 574-594; that stretch reads NTLWILVMVSVHVVALVLYLL. At 595 to 651 the chain is on the cytoplasmic side; the sequence is DRFSPFGRFKLSHSDSNEEKALNLSSAVWFAWGVLLNSGIGEGTPRSFSARVLGMVW. A helical membrane pass occupies residues 652–672; it reads AGFAMIIVASYTANLAAFLVL. Topologically, residues 673 to 831 are extracellular; the sequence is ERPKTKLSGI…KTPNTLGLKN (159 aa). An N-linked (GlcNAc...) asparagine glycan is attached at Asn-693. Positions 703 and 747 each coordinate glycine. A helical transmembrane segment spans residues 832-852; the sequence is MAGVFILVGVGIAGGVGLIII. Over 853–997 the chain is Cytoplasmic; the sequence is EVIYKKHQVK…YTSDVSHLVV (145 aa). Positions 947-997 are disordered; it reads ELGKPGQSPKVMSANQPGMPMPMLGKTRPQQSVLPPRYSPGYTSDVSHLVV. A compositionally biased stretch (polar residues) spans 987–997; the sequence is GYTSDVSHLVV.

This sequence belongs to the glutamate-gated ion channel (TC 1.A.10.1) family. As to quaternary structure, forms a heteromeric NMDA channel with Nmdar2.

Its subcellular location is the cell membrane. The protein localises to the postsynaptic cell membrane. It is found in the postsynaptic density. In terms of biological role, NMDA receptor subtype of glutamate-gated ion channels with high calcium permeability and voltage-dependent sensitivity to magnesium. Mediated by glycine. This protein plays a key role in synaptic plasticity, synaptogenesis, excitotoxicity, memory acquisition and learning. It mediates neuronal functions in glutamate neurotransmission. Is involved in the cell surface targeting of NMDA receptors. Plays a role in associative learning and in long-term memory consolidation. In Drosophila erecta (Fruit fly), this protein is Glutamate [NMDA] receptor subunit 1.